The sequence spans 1769 residues: U3 small nucleolar RNA-associated protein 10 (1769 aa).

Serine 2 carries the N-acetylserine modification. The HEAT repeat unit spans residues leucine 1729 to tyrosine 1767.

Belongs to the HEATR1/UTP10 family. In terms of assembly, interacts with snoRNA U3. Interacts with MPP10. Component of the ribosomal small subunit (SSU) processome composed of at least 40 protein subunits and snoRNA U3. In the absence of snoRNA3, forms a complex with other t-UTPs. This complex can associate with pre-18S ribosomal RNAs.

Its subcellular location is the nucleus. The protein localises to the nucleolus. The protein resides in the mitochondrion. Its function is as follows. Involved in nucleolar processing of pre-18S ribosomal RNA. Required for optimal pre-ribosomal RNA transcription by RNA polymerase I together with a subset of U3 proteins required for transcription (t-UTPs). Involved in ribosome biosynthesis. In Saccharomyces cerevisiae (strain ATCC 204508 / S288c) (Baker's yeast), this protein is U3 small nucleolar RNA-associated protein 10 (UTP10).